A 226-amino-acid chain; its full sequence is ATP synthase F(0) complex subunit a (226 aa).

The next 6 membrane-spanning stretches (helical) occupy residues 12-32 (PTMM…ILFP), 68-88 (WTLM…LGLL), 97-117 (QLSM…VTGF), 138-158 (IPML…ALAV), 164-184 (ITAG…LMSI), and 189-209 (ASIT…VALI).

It belongs to the ATPase A chain family. Component of the ATP synthase complex composed at least of ATP5F1A/subunit alpha, ATP5F1B/subunit beta, ATP5MC1/subunit c (homooctomer), MT-ATP6/subunit a, MT-ATP8/subunit 8, ATP5ME/subunit e, ATP5MF/subunit f, ATP5MG/subunit g, ATP5MK/subunit k, ATP5MJ/subunit j, ATP5F1C/subunit gamma, ATP5F1D/subunit delta, ATP5F1E/subunit epsilon, ATP5PF/subunit F6, ATP5PB/subunit b, ATP5PD/subunit d, ATP5PO/subunit OSCP. ATP synthase complex consists of a soluble F(1) head domain (subunits alpha(3) and beta(3)) - the catalytic core - and a membrane F(0) domain - the membrane proton channel (subunits c, a, 8, e, f, g, k and j). These two domains are linked by a central stalk (subunits gamma, delta, and epsilon) rotating inside the F1 region and a stationary peripheral stalk (subunits F6, b, d, and OSCP). Interacts with DNAJC30; interaction is direct.

It localises to the mitochondrion inner membrane. It catalyses the reaction H(+)(in) = H(+)(out). Subunit a, of the mitochondrial membrane ATP synthase complex (F(1)F(0) ATP synthase or Complex V) that produces ATP from ADP in the presence of a proton gradient across the membrane which is generated by electron transport complexes of the respiratory chain. ATP synthase complex consist of a soluble F(1) head domain - the catalytic core - and a membrane F(1) domain - the membrane proton channel. These two domains are linked by a central stalk rotating inside the F(1) region and a stationary peripheral stalk. During catalysis, ATP synthesis in the catalytic domain of F(1) is coupled via a rotary mechanism of the central stalk subunits to proton translocation. With the subunit c (ATP5MC1), forms the proton-conducting channel in the F(0) domain, that contains two crucial half-channels (inlet and outlet) that facilitate proton movement from the mitochondrial intermembrane space (IMS) into the matrix. Protons are taken up via the inlet half-channel and released through the outlet half-channel, following a Grotthuss mechanism. The polypeptide is ATP synthase F(0) complex subunit a (Dasypus novemcinctus (Nine-banded armadillo)).